Reading from the N-terminus, the 417-residue chain is MFIDSEYSSFLIINVTFFAVKLLQFGLVWLAPRTFDTSTHLFLEHYGITSNPWWGKLLSWDSIFFLKTSLWMRNSGYSAPQYEHEWAFSPIWSIIIQSSDLQHIVLKAVSFNLLLHYLSTWIVYALTKLTFPPFGQNVQTKLALTTSVLFILSSAAGFLISVYSEPIAFTFSLLGMLFRQWSISFDVYGNLHMDKLKWISYLLSSFCFAFAFLNRSNCLLLGLFYVHDCLNLFKQKKWITSIFYPILSGTILFGVFVYFHYYFPYAALCPERGEWCNSKIYGLPIPYQSLYSYIQSKHWNVGFLKYWTPNNIPNFLFGLPNIVITWNAITYFSYQYPSRNMKPYIWIARIFLFIMVFLANVQIINRVSSFLPLSLWYISDSLIKNPHEMRIVKYYVMWLLIWIPTQTALFACFLPPA.

9 helical membrane-spanning segments follow: residues 10–30 (FLIINVTFFAVKLLQFGLVWL), 104–124 (IVLKAVSFNLLLHYLSTWIVY), 142–162 (LALTTSVLFILSSAAGFLISV), 167–187 (IAFTFSLLGMLFRQWSISFDV), 206–226 (FCFAFAFLNRSNCLLLGLFYV), 239–259 (ITSIFYPILSGTILFGVFVYF), 312–332 (IPNFLFGLPNIVITWNAITYF), 344–364 (YIWIARIFLFIMVFLANVQII), and 394–414 (YYVMWLLIWIPTQTALFACFL).

This sequence belongs to the PIGV family.

Its subcellular location is the endoplasmic reticulum membrane. The protein operates within glycolipid biosynthesis; glycosylphosphatidylinositol-anchor biosynthesis. In terms of biological role, mannosyltransferase involved in glycosylphosphatidylinositol-anchor biosynthesis. Transfers the second mannose to the glycosylphosphatidylinositol during GPI precursor assembly. The protein is GPI mannosyltransferase 2 (GPI18) of Kluyveromyces lactis (strain ATCC 8585 / CBS 2359 / DSM 70799 / NBRC 1267 / NRRL Y-1140 / WM37) (Yeast).